The primary structure comprises 397 residues: 1-deoxy-D-xylulose 5-phosphate reductoisomerase (397 aa).

Residues Thr-17, Gly-18, Ser-19, Ile-20, Asn-47, and Asn-130 each coordinate NADPH. Position 131 (Lys-131) interacts with 1-deoxy-D-xylulose 5-phosphate. Glu-132 is a binding site for NADPH. Asp-156 contacts Mn(2+). Ser-157, Glu-158, Ser-182, and His-205 together coordinate 1-deoxy-D-xylulose 5-phosphate. Glu-158 is a binding site for Mn(2+). Gly-211 serves as a coordination point for NADPH. Positions 218, 223, 224, and 227 each coordinate 1-deoxy-D-xylulose 5-phosphate. Glu-227 provides a ligand contact to Mn(2+).

This sequence belongs to the DXR family. It depends on Mg(2+) as a cofactor. Requires Mn(2+) as cofactor.

It carries out the reaction 2-C-methyl-D-erythritol 4-phosphate + NADP(+) = 1-deoxy-D-xylulose 5-phosphate + NADPH + H(+). It functions in the pathway isoprenoid biosynthesis; isopentenyl diphosphate biosynthesis via DXP pathway; isopentenyl diphosphate from 1-deoxy-D-xylulose 5-phosphate: step 1/6. Functionally, catalyzes the NADPH-dependent rearrangement and reduction of 1-deoxy-D-xylulose-5-phosphate (DXP) to 2-C-methyl-D-erythritol 4-phosphate (MEP). This is 1-deoxy-D-xylulose 5-phosphate reductoisomerase from Allorhizobium ampelinum (strain ATCC BAA-846 / DSM 112012 / S4) (Agrobacterium vitis (strain S4)).